The sequence spans 164 residues: Thioredoxin domain-containing protein R443 (164 aa).

The chain crosses the membrane as a helical span at residues 8 to 28; sequence HIVLIVLAIILILWIISLLLC. The region spanning 36–163 is the Thioredoxin domain; the sequence is YQVPIIQPMQ…LTQFIRSNMN (128 aa). A disulfide bond links cysteine 84 and cysteine 87.

This sequence belongs to the thioredoxin family.

Its subcellular location is the host membrane. It localises to the virion. The sequence is that of Thioredoxin domain-containing protein R443 from Acanthamoeba polyphaga mimivirus (APMV).